Consider the following 374-residue polypeptide: Guanine nucleotide-binding protein subunit alpha-15 (374 aa).

Residues 41–374 (GELKLLLLGT…ARYLDEINLL (334 aa)) enclose the G-alpha domain. The interval 44 to 57 (KLLLLGTGESGKST) is G1 motif. GTP is bound by residues 49–56 (GTGESGKS), 183–189 (LRSRMPT), 208–212 (DVGGQ), 277–280 (NKTD), and Ala-346. Mg(2+) contacts are provided by Ser-56 and Thr-189. The interval 181–189 (DVLRSRMPT) is G2 motif. The segment at 204–213 (LRIVDVGGQK) is G3 motif. Positions 273–280 (ILFLNKTD) are G4 motif. The segment at 344–349 (TCATDT) is G5 motif.

Belongs to the G-alpha family. G(q) subfamily. In terms of assembly, g proteins are composed of 3 units; alpha, beta and gamma. The alpha chain contains the guanine nucleotide binding site.

Functionally, guanine nucleotide-binding proteins (G proteins) are involved as modulators or transducers in various transmembrane signaling systems. The chain is Guanine nucleotide-binding protein subunit alpha-15 (GNA15) from Oryctolagus cuniculus (Rabbit).